We begin with the raw amino-acid sequence, 546 residues long: Probable malate:quinone oxidoreductase (546 aa).

The protein belongs to the MQO family. FAD serves as cofactor.

It catalyses the reaction (S)-malate + a quinone = a quinol + oxaloacetate. The protein operates within carbohydrate metabolism; tricarboxylic acid cycle; oxaloacetate from (S)-malate (quinone route): step 1/1. The polypeptide is Probable malate:quinone oxidoreductase (Acinetobacter baumannii (strain AB0057)).